Reading from the N-terminus, the 581-residue chain is uncharacterized protein (581 aa).

This is an uncharacterized protein from Borreliella burgdorferi (strain ATCC 35210 / DSM 4680 / CIP 102532 / B31) (Borrelia burgdorferi).